The sequence spans 804 residues: MKFTLSWLKDHLETDATLDEIVEKLTDIGLEVESVDDRAAFRAFTIARVLTATRHPDADKLQVLSVDTGDGKPVQVVCGAPNARAGLVGVLGRPGDYVPGLDVTLSVGKIRGVESFGMMCSERELDFSDEHNGIIDLAENAPVGTSFAAYMGFNDPIIEIGLTPNRADCTGIRGIARDLAAAGLGTLKNTLPDAVKGEGETPVKVILDQDAGNPFCTGFALRMVKGVKNGPSPKWMQQRLKAIGLRPINALVDITNYVTFDQGRPLHVFDAAKVKGNLTVRTARDGETILALDQREYKLNAGMYVIADENGPESIAGIMGGEHSGCDENTVDVLIESALWDPRMIARTGRELGIVTDARYRFERGVDPEMMVPGAEIATKLVLELCGGQPTVLDVVGYKPHTARVIDFPVTEVKRLTGLDVSYEDAFDILKRLGFGVEGDGKTIRATVPSWRGDVEGKADLVEEVMRIHGINRIDPQPLPSHGAVNGRILTTLQIRTRHARRMLASRGMMEAVTYSFISEAQAKAFGGGKPELKLANPIAADMSDMRPSLLPGLLAAAQRNADRGFDDIALFEVSGIYEGDTPDKQRRVAGGVRRGTAKVEGAGRFWAGNAAPVGVFDAKADALAALEAAGAPVDRIQIEAGGPEWLHPGRSGTLKLGPKVVLGTFGEFHPDTLEALDVSGALCGFEVYLDAIPEPKAKSARTKPALSLSLFQSLKRDYAFVVDAAVEAGNVVKAVSSADKKLIVGVQVFDIFTGASLGEGKKSIAVEVLLQPQDRTLTDEDLEVLSKQIVASVAKQTGGVLRG.

Residues 38–148 (RAAFRAFTIA…ENAPVGTSFA (111 aa)) enclose the tRNA-binding domain. In terms of domain architecture, B5 spans 401–476 (HTARVIDFPV…RIHGINRIDP (76 aa)). Mg(2+) contacts are provided by aspartate 454, aspartate 460, glutamate 463, and glutamate 464. One can recognise an FDX-ACB domain in the interval 710-803 (SLFQSLKRDY…VAKQTGGVLR (94 aa)).

Belongs to the phenylalanyl-tRNA synthetase beta subunit family. Type 1 subfamily. As to quaternary structure, tetramer of two alpha and two beta subunits. The cofactor is Mg(2+).

Its subcellular location is the cytoplasm. It catalyses the reaction tRNA(Phe) + L-phenylalanine + ATP = L-phenylalanyl-tRNA(Phe) + AMP + diphosphate + H(+). In Brucella melitensis biotype 1 (strain ATCC 23456 / CCUG 17765 / NCTC 10094 / 16M), this protein is Phenylalanine--tRNA ligase beta subunit.